The chain runs to 314 residues: Thymidylate synthase (314 aa).

Residues Arg-21 and 176 to 177 each bind dUMP; that span reads RR. The Nucleophile role is filled by Cys-196. Residues 216 to 219, Asn-227, and 257 to 259 each bind dUMP; these read RSAD and HLY. Residue Asp-219 participates in (6R)-5,10-methylene-5,6,7,8-tetrahydrofolate binding. Ser-313 is a (6R)-5,10-methylene-5,6,7,8-tetrahydrofolate binding site.

Belongs to the thymidylate synthase family. Bacterial-type ThyA subfamily. As to quaternary structure, homodimer.

Its subcellular location is the cytoplasm. The enzyme catalyses dUMP + (6R)-5,10-methylene-5,6,7,8-tetrahydrofolate = 7,8-dihydrofolate + dTMP. It functions in the pathway pyrimidine metabolism; dTTP biosynthesis. In terms of biological role, catalyzes the reductive methylation of 2'-deoxyuridine-5'-monophosphate (dUMP) to 2'-deoxythymidine-5'-monophosphate (dTMP) while utilizing 5,10-methylenetetrahydrofolate (mTHF) as the methyl donor and reductant in the reaction, yielding dihydrofolate (DHF) as a by-product. This enzymatic reaction provides an intracellular de novo source of dTMP, an essential precursor for DNA biosynthesis. This is Thymidylate synthase from Listeria monocytogenes serotype 4b (strain F2365).